We begin with the raw amino-acid sequence, 565 residues long: Tetratricopeptide repeat protein 39A (565 aa).

TPR repeat units lie at residues 271-304 (AIFL…QQVW), 461-494 (CLIQ…EKKL), and 502-535 (PNAL…YKVY).

Belongs to the TTC39 family.

In Danio rerio (Zebrafish), this protein is Tetratricopeptide repeat protein 39A (ttc39a).